A 444-amino-acid chain; its full sequence is Tubulin beta-7 chain (444 aa).

GTP-binding residues include Gln-11, Glu-69, Ser-138, Gly-142, Thr-143, Gly-144, Asn-204, and Asn-226. Residue Glu-69 participates in Mg(2+) binding.

This sequence belongs to the tubulin family. Dimer of alpha and beta chains. A typical microtubule is a hollow water-filled tube with an outer diameter of 25 nm and an inner diameter of 15 nM. Alpha-beta heterodimers associate head-to-tail to form protofilaments running lengthwise along the microtubule wall with the beta-tubulin subunit facing the microtubule plus end conferring a structural polarity. Microtubules usually have 13 protofilaments but different protofilament numbers can be found in some organisms and specialized cells. Mg(2+) is required as a cofactor.

It is found in the cytoplasm. The protein localises to the cytoskeleton. In terms of biological role, tubulin is the major constituent of microtubules, a cylinder consisting of laterally associated linear protofilaments composed of alpha- and beta-tubulin heterodimers. Microtubules grow by the addition of GTP-tubulin dimers to the microtubule end, where a stabilizing cap forms. Below the cap, tubulin dimers are in GDP-bound state, owing to GTPase activity of alpha-tubulin. In Gossypium hirsutum (Upland cotton), this protein is Tubulin beta-7 chain.